A 312-amino-acid chain; its full sequence is Dipeptide transport ATP-binding protein DppF (312 aa).

Positions 10 to 255 (IKNLDLTFNK…PIHPYTKSLL (246 aa)) constitute an ABC transporter domain. ATP is bound at residue 45–52 (GESGSGKT).

The protein belongs to the ABC transporter superfamily. The complex is composed of two ATP-binding proteins (DppD and DppF), two transmembrane proteins (DppB and DppC) and a solute-binding protein (DppA).

It localises to the cell membrane. The catalysed reaction is a dipeptide(out) + ATP + H2O = a dipeptide(in) + ADP + phosphate + H(+). In terms of biological role, part of the ABC transporter DppABCDF involved in dipeptide transport. Responsible for energy coupling to the transport system. The protein is Dipeptide transport ATP-binding protein DppF of Lactococcus lactis subsp. cremoris (strain MG1363).